The following is a 468-amino-acid chain: Serine/threonine-protein phosphatase 2A 55 kDa regulatory subunit B beta isoform (468 aa).

7 WD repeats span residues 47 to 86 (SSAD…KNQP), 112 to 153 (EIEE…KRPE), 196 to 234 (AHTY…RSFN), 245 to 285 (ELTE…LCDK), 304 to 342 (EIIS…RPIE), 359 to 400 (ENDC…DVTL), and 435 to 468 (DFSK…DKVN).

It belongs to the phosphatase 2A regulatory subunit B family. In terms of assembly, PP2A consists of a common heterodimeric core enzyme, composed of a 36 kDa catalytic subunit (subunit C) and a 65 kDa constant regulatory subunit (PR65 or subunit A), that associates with a variety of regulatory subunits.

It is found in the cytoplasm. Its subcellular location is the cytoskeleton. It localises to the membrane. Functionally, the B regulatory subunit might modulate substrate selectivity and catalytic activity, and might also direct the localization of the catalytic enzyme to a particular subcellular compartment. Negatively controls the initiation of oocyte maturation. This Xenopus laevis (African clawed frog) protein is Serine/threonine-protein phosphatase 2A 55 kDa regulatory subunit B beta isoform (ppp2r2b).